The primary structure comprises 283 residues: Acetyl-coenzyme A carboxylase carboxyl transferase subunit beta (283 aa).

Residues 29-283 form the CoA carboxyltransferase N-terminal domain; sequence LWVACPKCQQ…LKLHERGAHY (255 aa). The Zn(2+) site is built by Cys33, Cys36, Cys51, and Cys54. The C4-type zinc-finger motif lies at 33-54; the sequence is CPKCQQSIYHKDLGYYRTCPVC.

Belongs to the AccD/PCCB family. Acetyl-CoA carboxylase is a heterohexamer composed of biotin carboxyl carrier protein (AccB), biotin carboxylase (AccC) and two subunits each of ACCase subunit alpha (AccA) and ACCase subunit beta (AccD). Zn(2+) is required as a cofactor.

The protein resides in the cytoplasm. The catalysed reaction is N(6)-carboxybiotinyl-L-lysyl-[protein] + acetyl-CoA = N(6)-biotinyl-L-lysyl-[protein] + malonyl-CoA. Its pathway is lipid metabolism; malonyl-CoA biosynthesis; malonyl-CoA from acetyl-CoA: step 1/1. In terms of biological role, component of the acetyl coenzyme A carboxylase (ACC) complex. Biotin carboxylase (BC) catalyzes the carboxylation of biotin on its carrier protein (BCCP) and then the CO(2) group is transferred by the transcarboxylase to acetyl-CoA to form malonyl-CoA. The polypeptide is Acetyl-coenzyme A carboxylase carboxyl transferase subunit beta (Latilactobacillus sakei subsp. sakei (strain 23K) (Lactobacillus sakei subsp. sakei)).